The chain runs to 291 residues: Mitochondrial citrate transporter B (291 aa).

Solcar repeat units follow at residues 10–97, 105–193, and 201–283; these read PQKW…IKNS, LSPA…LKES, and PTLF…MTYL. 6 consecutive transmembrane segments (helical) span residues 16 to 36, 74 to 94, 112 to 132, 172 to 192, 203 to 220, and 255 to 276; these read LIAGGVAGGVEAASTYPFEYA, STLIIGTTAKAAVRFVSYDTI, VAGVVAGATESVLAVTPTERI, TTLKQSATSAVRMGTYNILKE, LFTTFCMGALAGVVTVYA, and FWKGSSMRLGRLLLSGGIVFSV.

The protein belongs to the mitochondrial carrier (TC 2.A.29) family.

It localises to the mitochondrion inner membrane. The catalysed reaction is citrate(in) + H(+)(in) = citrate(out) + H(+)(out). In terms of biological role, mitochondrial transporter that mediates citrate export from mitochondria to cytoplasm. Both ctpA, ctpB, and ctpD play important roles in citric acid transport across the mitochondrial membrane and function in a redundant manner. This is Mitochondrial citrate transporter B from Aspergillus niger (strain ATCC 1015 / CBS 113.46 / FGSC A1144 / LSHB Ac4 / NCTC 3858a / NRRL 328 / USDA 3528.7).